Consider the following 156-residue polypeptide: Transcription elongation factor GreA (156 aa).

A coiled-coil region spans residues 7-27 (MTQEGLDKLKLELENLKLVKR).

This sequence belongs to the GreA/GreB family.

In terms of biological role, necessary for efficient RNA polymerase transcription elongation past template-encoded arresting sites. The arresting sites in DNA have the property of trapping a certain fraction of elongating RNA polymerases that pass through, resulting in locked ternary complexes. Cleavage of the nascent transcript by cleavage factors such as GreA or GreB allows the resumption of elongation from the new 3'terminus. GreA releases sequences of 2 to 3 nucleotides. This Lactococcus lactis subsp. lactis (strain IL1403) (Streptococcus lactis) protein is Transcription elongation factor GreA.